A 412-amino-acid polypeptide reads, in one-letter code: Gamma-glutamyl phosphate reductase (412 aa).

It belongs to the gamma-glutamyl phosphate reductase family.

It is found in the cytoplasm. The catalysed reaction is L-glutamate 5-semialdehyde + phosphate + NADP(+) = L-glutamyl 5-phosphate + NADPH + H(+). It participates in amino-acid biosynthesis; L-proline biosynthesis; L-glutamate 5-semialdehyde from L-glutamate: step 2/2. Functionally, catalyzes the NADPH-dependent reduction of L-glutamate 5-phosphate into L-glutamate 5-semialdehyde and phosphate. The product spontaneously undergoes cyclization to form 1-pyrroline-5-carboxylate. This Nitratiruptor sp. (strain SB155-2) protein is Gamma-glutamyl phosphate reductase.